The sequence spans 310 residues: Ribosomal RNA small subunit methyltransferase H (310 aa).

S-adenosyl-L-methionine is bound by residues 32–34 (GGH), Asp-52, Phe-79, Asp-100, and Gln-107.

The protein belongs to the methyltransferase superfamily. RsmH family.

The protein localises to the cytoplasm. The enzyme catalyses cytidine(1402) in 16S rRNA + S-adenosyl-L-methionine = N(4)-methylcytidine(1402) in 16S rRNA + S-adenosyl-L-homocysteine + H(+). In terms of biological role, specifically methylates the N4 position of cytidine in position 1402 (C1402) of 16S rRNA. The protein is Ribosomal RNA small subunit methyltransferase H of Bacillus anthracis (strain A0248).